We begin with the raw amino-acid sequence, 73 residues long: Small ribosomal subunit protein bS18 (73 aa).

Belongs to the bacterial ribosomal protein bS18 family. In terms of assembly, part of the 30S ribosomal subunit. Forms a tight heterodimer with protein bS6.

In terms of biological role, binds as a heterodimer with protein bS6 to the central domain of the 16S rRNA, where it helps stabilize the platform of the 30S subunit. This Prochlorococcus marinus (strain MIT 9313) protein is Small ribosomal subunit protein bS18.